The chain runs to 582 residues: Cryptochrome-2 (582 aa).

Residues 12 to 141 enclose the Photolyase/cryptochrome alpha/beta domain; it reads CRSVHWFRRG…EVVIENSHTL (130 aa). FAD contacts are provided by residues Ser261, Gln298, His364, and 396-398; that span reads DAD. The interval 521–559 is disordered; that stretch reads GPVTDSAPGQGSSTSTAVRLPQSDQASPKRKHEGAEELC. The span at 527–546 shows a compositional bias: polar residues; sequence APGQGSSTSTAVRLPQSDQA.

Belongs to the DNA photolyase class-1 family. As to quaternary structure, component of the circadian core oscillator, which includes the CRY proteins, CLOCK or NPAS2, BMAL1 or BMAL2, CSNK1E, and the PER proteins. Requires FAD as cofactor. The cofactor is (6R)-5,10-methylene-5,6,7,8-tetrahydrofolate. As to expression, expressed in the pineal gland.

Its subcellular location is the cytoplasm. It is found in the nucleus. Transcriptional repressor which forms a core component of the circadian clock. The circadian clock, an internal time-keeping system, regulates various physiological processes through the generation of approximately 24 hour circadian rhythms in gene expression, which are translated into rhythms in metabolism and behavior. It is derived from the Latin roots 'circa' (about) and 'diem' (day) and acts as an important regulator of a wide array of physiological functions including metabolism, sleep, body temperature, blood pressure, endocrine, immune, cardiovascular, and renal function. Consists of two major components: the central clock, residing in the suprachiasmatic nucleus (SCN) of the brain, and the peripheral clocks that are present in nearly every tissue and organ system. Both the central and peripheral clocks can be reset by environmental cues, also known as Zeitgebers (German for 'timegivers'). The predominant Zeitgeber for the central clock is light, which is sensed by retina and signals directly to the SCN. The central clock entrains the peripheral clocks through neuronal and hormonal signals, body temperature and feeding-related cues, aligning all clocks with the external light/dark cycle. Circadian rhythms allow an organism to achieve temporal homeostasis with its environment at the molecular level by regulating gene expression to create a peak of protein expression once every 24 hours to control when a particular physiological process is most active with respect to the solar day. Transcription and translation of core clock components (CLOCK, NPAS2, BMAL1, BMAL2, PER1, PER2, PER3, CRY1 and CRY2) plays a critical role in rhythm generation, whereas delays imposed by post-translational modifications (PTMs) are important for determining the period (tau) of the rhythms (tau refers to the period of a rhythm and is the length, in time, of one complete cycle). A diurnal rhythm is synchronized with the day/night cycle, while the ultradian and infradian rhythms have a period shorter and longer than 24 hours, respectively. Disruptions in the circadian rhythms contribute to the pathology of cardiovascular diseases, cancer, metabolic syndromes and aging. A transcription/translation feedback loop (TTFL) forms the core of the molecular circadian clock mechanism. Transcription factors, CLOCK or NPAS2 and BMAL1 or BMAL2, form the positive limb of the feedback loop, act in the form of a heterodimer and activate the transcription of core clock genes and clock-controlled genes (involved in key metabolic processes), harboring E-box elements (5'-CACGTG-3') within their promoters. The core clock genes: PER1/2/3 and CRY1/2 which are transcriptional repressors form the negative limb of the feedback loop and interact with the CLOCK|NPAS2-BMAL1|BMAL2 heterodimer inhibiting its activity and thereby negatively regulating their own expression. This heterodimer also activates nuclear receptors NR1D1/2, RORA/B/G, which form a second feedback loop and which activate and repress BMAL1 transcription, respectively. CRY1 and CRY2 have redundant functions but also differential and selective contributions at least in defining the pace of the SCN circadian clock and its circadian transcriptional outputs. Less potent transcriptional repressor in cerebellum and liver than CRY1, though less effective in lengthening the period of the SCN oscillator. Seems to play a critical role in tuning SCN circadian period by opposing the action of CRY1. With CRY1, dispensable for circadian rhythm generation but necessary for the development of intercellular networks for rhythm synchrony. Represses CLOCK-BMAL1-mediated transcriptional activation. This is Cryptochrome-2 (CRY2) from Gallus gallus (Chicken).